A 495-amino-acid polypeptide reads, in one-letter code: Two-component response regulator-like APRR3 (495 aa).

Residues 65 to 183 (KVLLVENDDS…ELKNLWQHVW (119 aa)) form the Response regulatory domain. 2 disordered regions span residues 188 to 441 (SSSG…RWAQ) and 465 to 495 (HSRK…SEDN). The span at 206 to 217 (PESTQGSENDAS) shows a compositional bias: polar residues. The span at 231–248 (GLSNQDGGSDNGSGTQSS) shows a compositional bias: low complexity. A compositionally biased stretch (polar residues) spans 256–265 (TKSTSPSNQF). A compositionally biased stretch (basic and acidic residues) spans 284 to 293 (RLKEAEDQKE). Residues 294–304 (QIGTGSQTGMS) are compositionally biased toward polar residues. Over residues 307 to 319 (KKAEEPGDLEKNA) the composition is skewed to basic and acidic residues. A compositionally biased stretch (polar residues) spans 335 to 350 (NRSSGNSQVESKAPSS). The stretch at 349 to 372 (SSNREDLQSLEQTLKKTREDRDYK) forms a coiled coil. The span at 351–378 (NREDLQSLEQTLKKTREDRDYKVGDRSV) shows a compositional bias: basic and acidic residues. Composition is skewed to polar residues over residues 380–395 (RHSN…NGAT) and 420–436 (GSSS…SSGS). The CCT domain occupies 442–484 (REAALMKFRLKRKERCFEKKVRYHSRKKLAEQRPHVKGQFIRK). The span at 483–495 (RKRDDHKSGSEDN) shows a compositional bias: basic and acidic residues.

The protein belongs to the ARR-like family. Interacts with APRR1/TOC1 (via N-terminus). Post-translationally, phosphorylated by WNK1; during the night. Phosphorylation is required for optimal interaction with APRR1/TOC1.

Its subcellular location is the nucleus. Functionally, controls photoperiodic flowering response. Component of the circadian clock. Controls the degradation of APRR1/TOC1 by the SCF(ZTL) complex. Expression of several members of the ARR-like family is controlled by circadian rhythm. The particular coordinated sequential expression of APRR9, APRR7, APRR5, APRR3 and APPR1 result to circadian waves that may be at the basis of the endogenous circadian clock. In Arabidopsis thaliana (Mouse-ear cress), this protein is Two-component response regulator-like APRR3 (APRR3).